Reading from the N-terminus, the 736-residue chain is Gingipain R2 (736 aa).

The first 24 residues, 1–24, serve as a signal peptide directing secretion; it reads MKKNFSRIVSIVAFSSLLGGMAFA. Positions 25–229 are excised as a propeptide; sequence QPAERGRNPQ…SVFMNYEATR (205 aa). 7 residues coordinate Ca(2+): aspartate 307, valine 329, aspartate 332, tyrosine 334, glutamate 336, glutamate 390, and histidine 395. The active-site Proton donor is histidine 440. Cysteine 473 functions as the Nucleophile in the catalytic mechanism. The Ca(2+) site is built by phenylalanine 478, glutamate 487, aspartate 521, glutamate 522, glutamate 525, histidine 531, aspartate 613, and glutamate 639.

This sequence belongs to the peptidase C25 family.

The protein localises to the secreted. It carries out the reaction Hydrolysis of proteins and small molecule substrates, with a preference for Arg in P1.. In terms of biological role, thiol protease. Acts synergistically with RgpA to catalyze the maturation of fimbrial subunits, such as FimA. Its proteolytic activity is a major factor in both periodontal tissue destruction and in evasion of host defense mechanisms. The sequence is that of Gingipain R2 from Porphyromonas gingivalis (strain ATCC 33277 / DSM 20709 / CIP 103683 / JCM 12257 / NCTC 11834 / 2561).